The chain runs to 276 residues: Tyrosinase (276 aa).

Cu cation-binding residues include His38, His56, His66, His193, His197, and His219.

This sequence belongs to the tyrosinase family. Cu(2+) serves as cofactor.

The catalysed reaction is 2 L-dopa + O2 = 2 L-dopaquinone + 2 H2O. It carries out the reaction L-tyrosine + O2 = L-dopaquinone + H2O. Its function is as follows. This is a copper-containing oxidase that functions in the formation of pigments such as melanins and other polyphenolic compounds. This Streptomyces galbus protein is Tyrosinase (melC2).